Here is a 337-residue protein sequence, read N- to C-terminus: Putative long-chain-alcohol O-fatty-acyltransferase 10 (337 aa).

The next 8 membrane-spanning stretches (helical) occupy residues 7–27, 38–58, 59–79, 82–102, 142–162, 228–248, 254–274, and 285–305; these read SFVK…YIPS, SVLP…FTIF, SSTT…LFAF, GPLL…CLPI, ILLL…LLTI, MGCM…YFYI, TLEV…EIAV, and MLLR…LFFG.

The protein belongs to the wax synthase family.

The protein localises to the membrane. It carries out the reaction a long chain fatty alcohol + a fatty acyl-CoA = a wax ester + CoA. Catalyzes the final step in the synthesis of long-chain linear esters (waxes). The polypeptide is Putative long-chain-alcohol O-fatty-acyltransferase 10 (Arabidopsis thaliana (Mouse-ear cress)).